The primary structure comprises 88 residues: Small ribosomal subunit protein eS25B (88 aa).

The protein belongs to the eukaryotic ribosomal protein eS25 family. In terms of assembly, component of the small ribosomal subunit (SSU). Mature yeast ribosomes consist of a small (40S) and a large (60S) subunit. The 40S small subunit contains 1 molecule of ribosomal RNA (18S rRNA) and at least 33 different proteins. The large 60S subunit contains 3 rRNA molecules (25S, 5.8S and 5S rRNA) and at least 46 different proteins.

Its subcellular location is the cytoplasm. Component of the ribosome, a large ribonucleoprotein complex responsible for the synthesis of proteins in the cell. The small ribosomal subunit (SSU) binds messenger RNAs (mRNAs) and translates the encoded message by selecting cognate aminoacyl-transfer RNA (tRNA) molecules. The large subunit (LSU) contains the ribosomal catalytic site termed the peptidyl transferase center (PTC), which catalyzes the formation of peptide bonds, thereby polymerizing the amino acids delivered by tRNAs into a polypeptide chain. The nascent polypeptides leave the ribosome through a tunnel in the LSU and interact with protein factors that function in enzymatic processing, targeting, and the membrane insertion of nascent chains at the exit of the ribosomal tunnel. This chain is Small ribosomal subunit protein eS25B (rps2501), found in Schizosaccharomyces pombe (strain 972 / ATCC 24843) (Fission yeast).